The chain runs to 981 residues: MAADSEPESEVFEITDFTTASEWERFISKVEEVLNDWKLIGPSLGKPLEKGIFTSGTWEERSDEISFADFRFSVTHHYLVQESPDKERKDEELEDAIPQSMQDLLCMNNDFPPRAHCLVRWYGLREFVVIAPAAHSDAVLSESKCNLLLSSISIALGNTGCQVPLFVQIHHKWRRMYMGECQGPGVRTDFEMVHLRKVPSQYTHLSGLLDIFKSKIGCPLTPLPPVSIAIRLTYVLQDWQQYFWPQQPPDIDALVGGEVGGLEFGKLPFGACEDPISELHLATTWPHLTEGIIVDNDVYSDLDPVQAPHWSVRVRKADNPQCLLGDFVTEFLKICRRKESTDEILGRSTFEEEGREVADITHALSKLTEPAPVPIHKLSVSNMVHTAKKKIRKHRGEESPLNSDVLNTILLFLFPDAVSEKPLDGTTSIDNSIPAPEAGDYTLYNQFKSAPSDSLTYKLALCLCMINFYHGGLKGVAHLWQEFVLEMRFRWENNFLIPGLASGSPDLRCCLLHQKLQMLNCCIERKKARDEGKKTSLSDSTTSAYPGDAGKTGGQLGLDHLRDTEKEKGEVGKSWDSWSDSEEEFFECLSDTEDLKGNGQESGKKGGPKEMANLKPEGRLHQHGKLTLLHNGEPLYIPVTQEPAPMTEDLLEEQSEVLAKLGTSAEGAHLRARMQSACLLSDMESFKAANPGCFLEDFVRWYSPRDYIEEEVTDEKGNVVLKGELSARMKIPSNMWVEAWETAKPVPARRQRRLFDDTREAEKVLHYLAMQKPADLARHLLPCVIHAAVLKVKEEESLENIPSVKKIIKQIIAHSSKVLHFPNPEDKKLEEIILQITTVEAIIARARSLKAKFGTEKCEHEEEKEGLERFVSCLLEQPEVSVTGAGRGHAGRIIHKLFVNAQRAAAVALPEEELKKSGCPEERRQTLVSDFPPPAGRELILRATVPRPAPYSKALPQRMYSVLTKEDFRLAGAFSSDTSFF.

Phosphoserine occurs at positions 83, 379, 536, 579, 581, and 590. Residues 532-558 form a disordered region; that stretch reads GKKTSLSDSTTSAYPGDAGKTGGQLGL. The tract at residues 591–614 is disordered; the sequence is DTEDLKGNGQESGKKGGPKEMANL. S664 is subject to Phosphoserine.

This sequence belongs to the Rab3-GAP catalytic subunit family. As to quaternary structure, the Rab3 GTPase-activating complex is a heterodimer composed of Rab3gap1 and Rab3gap2. The Rab3 GTPase-activating complex interacts with DMXL2. Interacts with LMAN1. As to expression, in the eye, it is highly expressed within the lens, particularly in the anterior lens epithelium and in a ring corresponding to the equatorial region where anterior cells are differentiating into lens fibers. Also highly expressed in the retina.

The protein resides in the cytoplasm. It is found in the endoplasmic reticulum. Its subcellular location is the golgi apparatus. The protein localises to the cis-Golgi network. Its function is as follows. Catalytic subunit of the Rab3 GTPase-activating (Rab3GAP) complex composed of RAB3GAP1 and RAB3GAP2, which has GTPase-activating protein (GAP) activity towards various Rab3 subfamily members (RAB3A, RAB3B, RAB3C and RAB3D), RAB5A and RAB43, and guanine nucleotide exchange factor (GEF) activity towards RAB18. As part of the Rab3GAP complex, acts as a GAP for Rab3 proteins by converting active RAB3-GTP to the inactive form RAB3-GDP. Rab3 proteins are involved in regulated exocytosis of neurotransmitters and hormones. The Rab3GAP complex, acts as a GEF for RAB18 by promoting the conversion of inactive RAB18-GDP to the active form RAB18-GTP. Recruits and stabilizes RAB18 at the cis-Golgi membrane where RAB18 is most likely activated. Also involved in RAB18 recruitment at the endoplasmic reticulum (ER) membrane where it maintains proper ER structure. Required for normal eye and brain development. May participate in neurodevelopmental processes such as proliferation, migration and differentiation before synapse formation, and non-synaptic vesicular release of neurotransmitters. This Mus musculus (Mouse) protein is Rab3 GTPase-activating protein catalytic subunit.